A 130-amino-acid polypeptide reads, in one-letter code: uncharacterized protein (130 aa).

Asparagine 102 is a glycosylation site (N-linked (GlcNAc...) asparagine). The chain crosses the membrane as a helical span at residues 110–130 (DPLAFYLMFLIIITILLIMIL).

It localises to the membrane. This is an uncharacterized protein from Dictyostelium discoideum (Social amoeba).